Consider the following 173-residue polypeptide: Adenine phosphoribosyltransferase (173 aa).

Belongs to the purine/pyrimidine phosphoribosyltransferase family. Homodimer.

It is found in the cytoplasm. It catalyses the reaction AMP + diphosphate = 5-phospho-alpha-D-ribose 1-diphosphate + adenine. Its pathway is purine metabolism; AMP biosynthesis via salvage pathway; AMP from adenine: step 1/1. Its function is as follows. Catalyzes a salvage reaction resulting in the formation of AMP, that is energically less costly than de novo synthesis. The polypeptide is Adenine phosphoribosyltransferase (Macrococcus caseolyticus (strain JCSC5402) (Macrococcoides caseolyticum)).